The chain runs to 292 residues: Acetyl-coenzyme A carboxylase carboxyl transferase subunit beta (292 aa).

The CoA carboxyltransferase N-terminal domain occupies 29-292 (LWVKCSECGQ…HGVKELVQTN (264 aa)). 4 residues coordinate Zn(2+): Cys33, Cys36, Cys52, and Cys55. The segment at 33–55 (CSECGQVAYRKDLISNFNVCSNC) adopts a C4-type zinc-finger fold.

It belongs to the AccD/PCCB family. In terms of assembly, acetyl-CoA carboxylase is a heterohexamer composed of biotin carboxyl carrier protein (AccB), biotin carboxylase (AccC) and two subunits each of ACCase subunit alpha (AccA) and ACCase subunit beta (AccD). The cofactor is Zn(2+).

The protein localises to the cytoplasm. It catalyses the reaction N(6)-carboxybiotinyl-L-lysyl-[protein] + acetyl-CoA = N(6)-biotinyl-L-lysyl-[protein] + malonyl-CoA. The protein operates within lipid metabolism; malonyl-CoA biosynthesis; malonyl-CoA from acetyl-CoA: step 1/1. Component of the acetyl coenzyme A carboxylase (ACC) complex. Biotin carboxylase (BC) catalyzes the carboxylation of biotin on its carrier protein (BCCP) and then the CO(2) group is transferred by the transcarboxylase to acetyl-CoA to form malonyl-CoA. The chain is Acetyl-coenzyme A carboxylase carboxyl transferase subunit beta from Prochlorococcus marinus subsp. pastoris (strain CCMP1986 / NIES-2087 / MED4).